The primary structure comprises 62 residues: Sperm protamine P1 (62 aa).

A disordered region spans residues 1–46 (MARCRRHSRSRSRSRNQCQRRRRRHYNRRRTYRRSRRHSRRRRVRR).

This sequence belongs to the protamine P1 family. In terms of tissue distribution, testis.

The protein resides in the nucleus. It localises to the chromosome. Its function is as follows. Protamines substitute for histones in the chromatin of sperm during the haploid phase of spermatogenesis. They compact sperm DNA into a highly condensed, stable and inactive complex. The polypeptide is Sperm protamine P1 (PRM1) (Planigale gilesi (Flat-skulled marsupial mouse)).